The sequence spans 205 residues: LexA repressor (205 aa).

Positions 28-48 (RAEIAKRLGFKSANAAEEHLK) form a DNA-binding region, H-T-H motif. Active-site for autocatalytic cleavage activity residues include S122 and K159.

It belongs to the peptidase S24 family. In terms of assembly, homodimer.

It catalyses the reaction Hydrolysis of Ala-|-Gly bond in repressor LexA.. Its function is as follows. Represses a number of genes involved in the response to DNA damage (SOS response), including recA and lexA. In the presence of single-stranded DNA, RecA interacts with LexA causing an autocatalytic cleavage which disrupts the DNA-binding part of LexA, leading to derepression of the SOS regulon and eventually DNA repair. The protein is LexA repressor of Shewanella woodyi (strain ATCC 51908 / MS32).